The primary structure comprises 462 residues: 3-isopropylmalate dehydratase large subunit (462 aa).

[4Fe-4S] cluster-binding residues include Cys-337, Cys-397, and Cys-400.

The protein belongs to the aconitase/IPM isomerase family. LeuC type 1 subfamily. As to quaternary structure, heterodimer of LeuC and LeuD. Requires [4Fe-4S] cluster as cofactor.

It catalyses the reaction (2R,3S)-3-isopropylmalate = (2S)-2-isopropylmalate. It participates in amino-acid biosynthesis; L-leucine biosynthesis; L-leucine from 3-methyl-2-oxobutanoate: step 2/4. Its function is as follows. Catalyzes the isomerization between 2-isopropylmalate and 3-isopropylmalate, via the formation of 2-isopropylmaleate. In Listeria monocytogenes serotype 4b (strain CLIP80459), this protein is 3-isopropylmalate dehydratase large subunit.